The following is a 503-amino-acid chain: Na(+)-translocating NADH-quinone reductase subunit B (503 aa).

4 helical membrane-spanning segments follow: residues 55–75, 120–140, 161–181, and 186–206; these read MMLV…NSGI, IFLP…VLFA, TLPP…GVVV, and FGGT…FLFF. An FMN phosphoryl threonine modification is found at T248. Helical transmembrane passes span 361-381, 387-407, 417-437, 452-472, and 475-495; these read TSTF…IASW, FGIG…LIAG, FFIP…LVFM, WIYG…NPAY, and GVML…YFAV.

The protein belongs to the NqrB/RnfD family. In terms of assembly, composed of six subunits; NqrA, NqrB, NqrC, NqrD, NqrE and NqrF. FMN serves as cofactor.

It is found in the cell inner membrane. It carries out the reaction a ubiquinone + n Na(+)(in) + NADH + H(+) = a ubiquinol + n Na(+)(out) + NAD(+). In terms of biological role, NQR complex catalyzes the reduction of ubiquinone-1 to ubiquinol by two successive reactions, coupled with the transport of Na(+) ions from the cytoplasm to the periplasm. NqrA to NqrE are probably involved in the second step, the conversion of ubisemiquinone to ubiquinol. The chain is Na(+)-translocating NADH-quinone reductase subunit B from Chlamydia abortus (strain DSM 27085 / S26/3) (Chlamydophila abortus).